The primary structure comprises 401 residues: Acetate kinase (401 aa).

Asn9 is a Mg(2+) binding site. Lys16 lines the ATP pocket. Arg88 lines the substrate pocket. Asp147 serves as the catalytic Proton donor/acceptor. Residues 207-211, 282-284, and 333-337 contribute to the ATP site; these read HLGNG, DCR, and GIGEN. Residue Glu388 participates in Mg(2+) binding.

This sequence belongs to the acetokinase family. In terms of assembly, homodimer. Mg(2+) serves as cofactor. Mn(2+) is required as a cofactor.

It localises to the cytoplasm. It catalyses the reaction acetate + ATP = acetyl phosphate + ADP. The protein operates within metabolic intermediate biosynthesis; acetyl-CoA biosynthesis; acetyl-CoA from acetate: step 1/2. Catalyzes the formation of acetyl phosphate from acetate and ATP. Can also catalyze the reverse reaction. The protein is Acetate kinase of Haemophilus influenzae (strain 86-028NP).